The primary structure comprises 148 residues: Deoxyuridine 5'-triphosphate nucleotidohydrolase (148 aa).

Substrate contacts are provided by residues 68–70, Asn-81, 85–87, and Lys-95; these read RSG and TVD.

Belongs to the dUTPase family. Requires Mg(2+) as cofactor.

It carries out the reaction dUTP + H2O = dUMP + diphosphate + H(+). It participates in pyrimidine metabolism; dUMP biosynthesis; dUMP from dCTP (dUTP route): step 2/2. Its function is as follows. This enzyme is involved in nucleotide metabolism: it produces dUMP, the immediate precursor of thymidine nucleotides and it decreases the intracellular concentration of dUTP so that uracil cannot be incorporated into DNA. This is Deoxyuridine 5'-triphosphate nucleotidohydrolase from Caldanaerobacter subterraneus subsp. tengcongensis (strain DSM 15242 / JCM 11007 / NBRC 100824 / MB4) (Thermoanaerobacter tengcongensis).